The chain runs to 879 residues: Interference hedgehog (879 aa).

A signal peptide spans 1–20; that stretch reads MTLLTSSLLLFSLLTSRLEA. At 21–703 the chain is on the extracellular side; the sequence is IPVLEKSPAH…ETFNMSPMLT (683 aa). 4 consecutive Ig-like C2-type domains span residues 45-142, 132-232, 252-340, and 346-432; these read PGVR…IARL, PLVV…ERIQ, PHLL…YIKV, and PQIV…LQVN. Intrachain disulfides connect cysteine 68–cysteine 126, cysteine 173–cysteine 220, cysteine 276–cysteine 324, and cysteine 367–cysteine 414. N-linked (GlcNAc...) asparagine glycosylation is found at asparagine 102 and asparagine 209. The disordered stretch occupies residues 426 to 467; the sequence is GTLLQVNPKQIQEPRESGGTHRPKPNQGSKQKQMYPPSPPNV. 2 consecutive Fibronectin type-III domains span residues 461–567 and 575–670; these read PPSP…LQPG and VPEL…TQRP. Asparagine 466 carries N-linked (GlcNAc...) asparagine glycosylation. Heparin-binding residues include arginine 497, lysine 501, lysine 503, and arginine 541. N-linked (GlcNAc...) asparagine glycosylation is present at asparagine 557. The segment at 662 to 698 is disordered; it reads LKQGRTQRPKTSTTEEPTLQMGDRDTTTPSHNETFNM. Composition is skewed to polar residues over residues 665-678 and 688-698; these read GRTQ…TEEP and TTPSHNETFNM. N-linked (GlcNAc...) asparagine glycosylation occurs at asparagine 693. Residues 704–724 traverse the membrane as a helical segment; the sequence is GTLGGGAVLTLLLISICLCVC. Topologically, residues 725-879 are cytoplasmic; it reads RRRSSRSRGN…SSGSLNSVGV (155 aa). The tract at residues 728 to 879 is disordered; that stretch reads SSRSRGNNPN…SSGSLNSVGV (152 aa). Low complexity-rich tracts occupy residues 822–836 and 863–879; these read RAGG…NNNN and SSRS…SVGV.

It belongs to the immunoglobulin superfamily. IHOG family. Homodimer. Heterotetramer; 2 iHog chains bind 2 hh chains when facilitated by heparin, heparin is required to promote high-affinity interactions between hh and iHog.

It is found in the membrane. Its function is as follows. Mediates response to the active Hedgehog (Hh) protein signal in embryos, functioning upstream or at the level of patched (ptc). This Drosophila erecta (Fruit fly) protein is Interference hedgehog.